We begin with the raw amino-acid sequence, 353 residues long: COMPASS component SPP1 (353 aa).

Residues 22–72 form a PHD-type zinc finger; the sequence is DVYCICKRPDYGELMVGCDGCDDWFHFTCLHIPEQFKDLVFSFYCPYCQAG. Zn(2+) contacts are provided by Cys-25, Cys-27, Cys-39, Cys-42, His-47, Cys-50, Cys-66, and Cys-69. Residues 83–124 are non coventional C3H-type zinc finger; sequence NGEGSLPKTLWKRKCRISDCYKPCLQDSKYCSEEHGREFVND. At Ser-87 the chain carries Phosphoserine. Cys-97, Cys-102, Cys-113, and His-117 together coordinate Zn(2+). Residues 235–244 are compositionally biased toward basic and acidic residues; the sequence is VECGKEDSKG. Residues 235–255 form a disordered region; sequence VECGKEDSKGTKRKKKKNSSR. The segment covering 245–255 has biased composition (basic residues); it reads TKRKKKKNSSR.

As to quaternary structure, component of the Set1C/COMPASS complex which consists of SET1(2), BRE2(2), SPP1(2), SDC1(1), SHG1(1), SWD1(1), SWD2(1), and SWD3(1).

The protein localises to the nucleus. Its function is as follows. Component of the Set1C/COMPASS complex that specifically mono-, di- and trimethylates histone H3 to form H3K4me1/2/3, which subsequently plays a role in telomere length maintenance and transcription elongation regulation. COMPASS recognizes ubiquitinated H2B on one face of the nucleosome which stimulates the methylation of H3 on the opposing face. SPP1/CPS40 can recognize methylated histone lysine residue H3K4me3 or unmethylated H3K4. Stimulates the RNA binding activity of SET1. This chain is COMPASS component SPP1, found in Saccharomyces cerevisiae (strain ATCC 204508 / S288c) (Baker's yeast).